A 149-amino-acid polypeptide reads, in one-letter code: Calmodulin (149 aa).

Ala2 carries the post-translational modification N-acetylalanine. EF-hand domains are found at residues 8–43 (EQIA…LGQN), 44–79 (PTEA…KMKD), 81–116 (DSEE…LGEK), and 117–149 (LTDE…MTSK). Ca(2+)-binding residues include Asp21, Asp23, Asp25, Thr27, Glu32, Asp57, Asp59, Asp61, Thr63, Glu68, Asp94, Asp96, Asn98, and Glu105. At Lys116 the chain carries N6,N6,N6-trimethyllysine. Asp130, Asp132, Asp134, Gln136, and Glu141 together coordinate Ca(2+).

It belongs to the calmodulin family.

Its function is as follows. Calmodulin mediates the control of a large number of enzymes, ion channels and other proteins by Ca(2+). Among the enzymes to be stimulated by the calmodulin-Ca(2+) complex are a number of protein kinases and phosphatases. The protein is Calmodulin of Pyuridae sp. (Sea squirt).